Reading from the N-terminus, the 376-residue chain is DINGGGATLPQKLYLTPDVLTAGFAPYIGVGSGKGKIAFLENKYNQFGTDTTKNVHWAGSDSKLTATELATYAADKEPGWGKLIQVPSVATSVAIPFRKAGANAVDLSVKELCGVFSGRIADWSGITGAGRSGPIQVVYRAESSGTTELFTRFLNAKCTTEPGTFAVTTTFANSYSLGLTPLAGAVAATGSDGVMAALNDTTVAEGRITYISPDFAAPTLAGLDDATKVARVGKGVVNGVAVEGKSPAAANVSAAISVVPLPAAADRGNPDVWVPVFGATTGGGVVAYPDSGYPILGFTNLIFSQCYANATQTGQVRDFFTKHYGTSANNDAAIEANAFVPLPSNWKAAVRASFLTASNALSIGNTNVCNGKGRPQ.

2 cysteine pairs are disulfide-bonded: C113-C158 and C306-C369.

Heterooligomer with human PON1. As to expression, found in human plasma.

It is found in the secreted. Functionally, phosphate-binding protein. This Unknown prokaryotic organism protein is Phosphate-binding protein.